We begin with the raw amino-acid sequence, 71 residues long: Small ribosomal subunit protein bS21 (71 aa).

It belongs to the bacterial ribosomal protein bS21 family.

In Dichelobacter nodosus (strain VCS1703A), this protein is Small ribosomal subunit protein bS21.